We begin with the raw amino-acid sequence, 353 residues long: Photosystem II protein D1 (353 aa).

Residue Thr2 is modified to N-acetylthreonine. Residue Thr2 is modified to Phosphothreonine. Transmembrane regions (helical) follow at residues 29 to 46 (YIGWFGVLMIPTLLTATS), 118 to 133 (HFLLGVACYMGREWEL), and 142 to 156 (WIAVAYSAPVAAATA). His118 contacts chlorophyll a. Tyr126 is a pheophytin a binding site. Asp170 and Glu189 together coordinate [CaMn4O5] cluster. A helical membrane pass occupies residues 197-218 (FHMLGVAGVFGGSLFSAMHGSL). Residue His198 coordinates chlorophyll a. A quinone contacts are provided by residues His215 and 264-265 (SF). His215 contacts Fe cation. His272 lines the Fe cation pocket. The helical transmembrane segment at 274–288 (FLAAWPVVGIWFTAL) threads the bilayer. His332, Glu333, Asp342, and Ala344 together coordinate [CaMn4O5] cluster. Positions 345–353 (ALEVPSLNG) are excised as a propeptide.

Belongs to the reaction center PufL/M/PsbA/D family. In terms of assembly, PSII is composed of 1 copy each of membrane proteins PsbA, PsbB, PsbC, PsbD, PsbE, PsbF, PsbH, PsbI, PsbJ, PsbK, PsbL, PsbM, PsbT, PsbX, PsbY, PsbZ, Psb30/Ycf12, at least 3 peripheral proteins of the oxygen-evolving complex and a large number of cofactors. It forms dimeric complexes. Requires The D1/D2 heterodimer binds P680, chlorophylls that are the primary electron donor of PSII, and subsequent electron acceptors. It shares a non-heme iron and each subunit binds pheophytin, quinone, additional chlorophylls, carotenoids and lipids. D1 provides most of the ligands for the Mn4-Ca-O5 cluster of the oxygen-evolving complex (OEC). There is also a Cl(-1) ion associated with D1 and D2, which is required for oxygen evolution. The PSII complex binds additional chlorophylls, carotenoids and specific lipids. as cofactor. Tyr-161 forms a radical intermediate that is referred to as redox-active TyrZ, YZ or Y-Z. Post-translationally, C-terminally processed by CTPA; processing is essential to allow assembly of the oxygen-evolving complex and thus photosynthetic growth.

Its subcellular location is the plastid. The protein resides in the chloroplast thylakoid membrane. The catalysed reaction is 2 a plastoquinone + 4 hnu + 2 H2O = 2 a plastoquinol + O2. Photosystem II (PSII) is a light-driven water:plastoquinone oxidoreductase that uses light energy to abstract electrons from H(2)O, generating O(2) and a proton gradient subsequently used for ATP formation. It consists of a core antenna complex that captures photons, and an electron transfer chain that converts photonic excitation into a charge separation. The D1/D2 (PsbA/PsbD) reaction center heterodimer binds P680, the primary electron donor of PSII as well as several subsequent electron acceptors. The protein is Photosystem II protein D1 of Lolium perenne (Perennial ryegrass).